The primary structure comprises 689 residues: Glycine--tRNA ligase beta subunit (689 aa).

Belongs to the class-II aminoacyl-tRNA synthetase family. As to quaternary structure, tetramer of two alpha and two beta subunits.

The protein localises to the cytoplasm. It carries out the reaction tRNA(Gly) + glycine + ATP = glycyl-tRNA(Gly) + AMP + diphosphate. This chain is Glycine--tRNA ligase beta subunit, found in Actinobacillus pleuropneumoniae serotype 5b (strain L20).